The following is a 338-amino-acid chain: Lipopolysaccharide 1,2-glucosyltransferase (338 aa).

Residues 33–38 and 130–131 contribute to the UDP site; these read GVDANY and DA. Positions 130 and 132 each coordinate Mg(2+). 2 short sequence motifs (DXD) span residues 130–132 and 215–217; these read DAD and DQD. Histidine 264 is a binding site for Mg(2+). Position 264 to 270 (264 to 270) interacts with UDP; the sequence is HYTGATK.

It belongs to the glycosyltransferase 8 family. It depends on Mg(2+) as a cofactor.

Its subcellular location is the cell inner membrane. It carries out the reaction UDP-glucose + [lipopolysaccharide] = UDP + D-glucosyl-[lipopolysaccharide].. The enzyme catalyses alpha-D-Glc-(1-&gt;3)-[alpha-D-Gal-(1-&gt;6)]-alpha-D-Glc-(1-&gt;3)-[L-alpha-D-Hep-(1-&gt;7)]-4-O-PO3(2-)-L-alpha-D-Hep-(1-&gt;3)-4-O-PO3(2-)-L-alpha-D-Hep-(1-&gt;5)-[alpha-Kdo-(2-&gt;4)]-alpha-Kdo-(2-&gt;6)-lipid A + UDP-alpha-D-glucose = alpha-D-Glc-(1-&gt;2)-alpha-D-Glc-(1-&gt;3)-[alpha-D-Gal-(1-&gt;6)]-alpha-D-Glc-(1-&gt;3)-[L-alpha-D-Hep-(1-&gt;7)]-4-O-PO3(2-)-L-alpha-D-Hep-(1-&gt;3)-4-O-PO3(2-)-L-alpha-D-Hep-(1-&gt;5)-[alpha-Kdo-(2-&gt;4)]-alpha-Kdo-(2-&gt;6)-lipid A + UDP + H(+). It functions in the pathway bacterial outer membrane biogenesis; LPS core biosynthesis. In terms of biological role, glucosyltransferase involved in the biosynthesis of the core oligosaccharide region of lipopolysaccharide (LPS). Catalyzes the addition of a glucose (glucose III) to the outer-core glucose II. This is Lipopolysaccharide 1,2-glucosyltransferase from Escherichia coli (strain K12).